The sequence spans 140 residues: Anti-sigma F factor (140 aa).

Belongs to the anti-sigma-factor family.

The catalysed reaction is L-seryl-[protein] + ATP = O-phospho-L-seryl-[protein] + ADP + H(+). It catalyses the reaction L-threonyl-[protein] + ATP = O-phospho-L-threonyl-[protein] + ADP + H(+). Functionally, binds to sigma F and blocks its ability to form an RNA polymerase holoenzyme (E-sigma F). Phosphorylates SpoIIAA on a serine residue. This phosphorylation may enable SpoIIAA to act as an anti-anti-sigma factor that counteracts SpoIIAB and thus releases sigma F from inhibition. In Clostridium perfringens (strain ATCC 13124 / DSM 756 / JCM 1290 / NCIMB 6125 / NCTC 8237 / Type A), this protein is Anti-sigma F factor.